A 579-amino-acid chain; its full sequence is PCNA-interacting partner (579 aa).

The interval 480 to 543 (TSFGNVHLDR…AKIPKKSNDS (64 aa)) is disordered. Positions 486–496 (HLDRSKNEKVS) are enriched in basic and acidic residues.

Belongs to the PARI family. In terms of assembly, interacts with RAD51 and PCNA. Interacts with PARP1. Interacts with TASOR. As to expression, restricted to testis. Overexpressed in multiple cancer cells.

It localises to the cytoplasm. Its subcellular location is the nucleus. Its function is as follows. Required to suppress inappropriate homologous recombination, thereby playing a central role DNA repair and in the maintenance of genomic stability. Antagonizes homologous recombination by interfering with the formation of the RAD51-DNA homologous recombination structure. Binds single-strand DNA and poly(A) homopolymers. Positively regulate the poly(ADP-ribosyl)ation activity of PARP1; however such function may be indirect. This is PCNA-interacting partner (PARPBP) from Homo sapiens (Human).